Here is an 894-residue protein sequence, read N- to C-terminus: Valine--tRNA ligase (894 aa).

Residues 1 to 22 (MKSIQTPSKSHTNTKETPVMSQ) show a composition bias toward polar residues. The interval 1–28 (MKSIQTPSKSHTNTKETPVMSQEETKGY) is disordered. The short motif at 69–79 (PNVTGSLHIGH) is the 'HIGH' region element. The 'KMSKS' region signature appears at 554-558 (KMSKS). Lysine 557 is a binding site for ATP. Residues 832 to 894 (IISRLEKQQE…VKVELQGIKG (63 aa)) are a coiled coil.

Belongs to the class-I aminoacyl-tRNA synthetase family. ValS type 1 subfamily. As to quaternary structure, monomer.

The protein resides in the cytoplasm. The enzyme catalyses tRNA(Val) + L-valine + ATP = L-valyl-tRNA(Val) + AMP + diphosphate. In terms of biological role, catalyzes the attachment of valine to tRNA(Val). As ValRS can inadvertently accommodate and process structurally similar amino acids such as threonine, to avoid such errors, it has a 'posttransfer' editing activity that hydrolyzes mischarged Thr-tRNA(Val) in a tRNA-dependent manner. This Wolinella succinogenes (strain ATCC 29543 / DSM 1740 / CCUG 13145 / JCM 31913 / LMG 7466 / NCTC 11488 / FDC 602W) (Vibrio succinogenes) protein is Valine--tRNA ligase.